Consider the following 647-residue polypeptide: MIKFSATLLATLIAASVNAATVDLRIMETTDLHSNMMDFDYYKDTATEKFGLVRTASLIHAARNEVKNSVLVDNGDLIQGSPLGDYMAAKGLKDGDVHPVYKALNTLDYAVGNLGNHEFNYGLDYLHNALAGAKFPYVNANIIDVKTQKPLFTPYLIKETSVIDKDGNPQTLKIGYIGFVPPQIMIWDKANLSGKVTVNDITETARKYVPEMREKGADIVVVIAHSGLSADPYHSMAENSVYYLSEVPGVDAIMFGHAHAVFPGKDFADIKGADIAKGTLNGIPAVMPGMWGDHLGVVDLVLNNDSGKWQVTQAKAEARPIYDAAAKKSLAAEDSKLVGILKADHDATREFVSKPIGKSADNMYSYLALVQDDPTVQVVNNAQKAYVEHFIQGDPDLAKLPVLSAAAPFKVGGRKNDPASFVEVEKGQLTFRNAADLYLYPNTLVVVKASGKEVKEWLECSAGQFNQIDIHSNKPQSLINWDGFRTYNFDVIDGVNYQIDVSQPARYDGECQMVNPQAERIKNLTFNGKPVDPNATFLVATNNYRAYGGKFAGTGDSHIAFASPDENRAVLAAWIGAESKRAGEIHPAADNNWRLAPIHSDTALDIRFETSPGDKAAAFIKAKGQYPMKKVAVDDIGFAIYQVDLSK.

A signal peptide spans 1-19; that stretch reads MIKFSATLLATLIAASVNA. Residues Asp-31, His-33, Asp-76, Asn-116, His-225, His-257, and His-259 each coordinate a divalent metal cation. Substrate-binding positions include Tyr-440 and 544–550; that span reads YRAYGGK.

Belongs to the 5'-nucleotidase family. It depends on a divalent metal cation as a cofactor.

It localises to the periplasm. It carries out the reaction a nucleoside 2',3'-cyclic phosphate + H2O = a nucleoside 3'-phosphate + H(+). The catalysed reaction is a ribonucleoside 3'-phosphate + H2O = a ribonucleoside + phosphate. Functionally, this bifunctional enzyme catalyzes two consecutive reactions during ribonucleic acid degradation. Converts a 2',3'-cyclic nucleotide to a 3'-nucleotide and then the 3'-nucleotide to the corresponding nucleoside and phosphate. The polypeptide is 2',3'-cyclic-nucleotide 2'-phosphodiesterase/3'-nucleotidase (cpdB) (Salmonella typhimurium (strain LT2 / SGSC1412 / ATCC 700720)).